A 602-amino-acid polypeptide reads, in one-letter code: Beta-(1--&gt;2)glucan export ATP-binding/permease protein NdvA (602 aa).

The region spanning 21-311 (GWVLAGANLL…VVGFVNSVFM (291 aa)) is the ABC transmembrane type-1 domain. The next 6 helical transmembrane spans lie at 22–42 (WVLAGANLLLAAAQFAEPVLF), 68–88 (LLLAWAVFGLFTIGCGAAVAL), 146–166 (EHFAALMSLVVLLPLSIYINW), 167–187 (RLALLLFALCVVFTVLTTLVV), 238–258 (LLAMQMPVLSWWALVTVITRA), and 285–305 (IVMFVSFATMLIQKLEQVVGF). The ABC transporter domain maps to 345 to 579 (VEFDNVSFSY…RGYFAELAHA (235 aa)). 378–385 (GATGAGKS) is a binding site for ATP.

It belongs to the ABC transporter superfamily. Beta-(1--&gt;2)glucan exporter (TC 3.A.1.108.1) family. Homodimer.

Its subcellular location is the cell inner membrane. It carries out the reaction [(1-&gt;2)-beta-D-glucosyl](n)(in) + ATP + H2O = [(1-&gt;2)-beta-D-glucosyl](n)(out) + ADP + phosphate + H(+). Its function is as follows. Involved in Beta-(1--&gt;2)glucan export. Transmembrane domains (TMD) form a pore in the inner membrane and the ATP-binding domain (NBD) is responsible for energy generation. The polypeptide is Beta-(1--&gt;2)glucan export ATP-binding/permease protein NdvA (Rhodopseudomonas palustris (strain BisA53)).